Consider the following 372-residue polypeptide: Flagellar P-ring protein (372 aa).

The first 26 residues, 1–26, serve as a signal peptide directing secretion; the sequence is MNLSSLPHRLLAAAVALCAIAAPASA.

This sequence belongs to the FlgI family. The basal body constitutes a major portion of the flagellar organelle and consists of four rings (L,P,S, and M) mounted on a central rod.

It localises to the periplasm. Its subcellular location is the bacterial flagellum basal body. Functionally, assembles around the rod to form the L-ring and probably protects the motor/basal body from shearing forces during rotation. The sequence is that of Flagellar P-ring protein from Xanthomonas campestris pv. campestris (strain ATCC 33913 / DSM 3586 / NCPPB 528 / LMG 568 / P 25).